The primary structure comprises 248 residues: Protein LIFEGUARD 3 (248 aa).

7 helical membrane passes run 42 to 62 (VYSI…TVVT), 74 to 94 (GLGL…LCPL), 105 to 125 (YLLL…TCAF), 130 to 150 (VILE…LYTF), 165 to 185 (FLFG…LFPL), 188 to 208 (VSVM…IVYD), and 222 to 242 (IWAA…LLTV).

This sequence belongs to the BI1 family.

Its subcellular location is the membrane. The protein is Protein LIFEGUARD 3 of Arabidopsis thaliana (Mouse-ear cress).